Here is a 291-residue protein sequence, read N- to C-terminus: 6-deoxy-6-sulfogluconolactonase (291 aa).

3 residues coordinate a divalent metal cation: E17, N148, and D198. The active-site Proton donor/acceptor is D198.

The protein belongs to the SMP-30/CGR1 family. It depends on a divalent metal cation as a cofactor.

It catalyses the reaction 6-deoxy-6-sulfo-D-glucono-1,5-lactone + H2O = 6-deoxy-6-sulfo-D-gluconate + H(+). In terms of biological role, catalyzes the hydrolysis of 6-deoxy-6-sulfo-D-glucono-1,5-lactone to form 6-deoxy-6-sulfo-D-gluconate. Is involved in a degradation pathway of sulfoquinovose (SQ) that allows P.putida SQ1 to use SQ as the sole carbon and energy source for growth. In Pseudomonas putida (Arthrobacter siderocapsulatus), this protein is 6-deoxy-6-sulfogluconolactonase.